The following is a 182-amino-acid chain: ATP-dependent protease subunit HslV (182 aa).

Residue T12 is part of the active site. Residues A167, C170, and T173 each coordinate Na(+).

Belongs to the peptidase T1B family. HslV subfamily. A double ring-shaped homohexamer of HslV is capped on each side by a ring-shaped HslU homohexamer. The assembly of the HslU/HslV complex is dependent on binding of ATP.

It is found in the cytoplasm. It catalyses the reaction ATP-dependent cleavage of peptide bonds with broad specificity.. Allosterically activated by HslU binding. Protease subunit of a proteasome-like degradation complex believed to be a general protein degrading machinery. The sequence is that of ATP-dependent protease subunit HslV from Pelodictyon phaeoclathratiforme (strain DSM 5477 / BU-1).